The chain runs to 311 residues: Homoserine kinase (311 aa).

ATP is bound at residue 88 to 98; the sequence is PEGLGLGSSGA.

This sequence belongs to the GHMP kinase family. Homoserine kinase subfamily.

The protein resides in the cytoplasm. The catalysed reaction is L-homoserine + ATP = O-phospho-L-homoserine + ADP + H(+). Its pathway is amino-acid biosynthesis; L-threonine biosynthesis; L-threonine from L-aspartate: step 4/5. Its function is as follows. Catalyzes the ATP-dependent phosphorylation of L-homoserine to L-homoserine phosphate. This is Homoserine kinase from Saccharolobus solfataricus (strain ATCC 35092 / DSM 1617 / JCM 11322 / P2) (Sulfolobus solfataricus).